The sequence spans 712 residues: Testis-specific gene 10 protein (712 aa).

S161 carries the phosphoserine modification. An interaction with HIF1A region spans residues 571–703 (QMTNERISMQ…SPDRDLDRSL (133 aa)). Residues 673–699 (YHLGSMKPNTKCHSPERAHHRSPDRDL) are disordered. Positions 685 to 699 (HSPERAHHRSPDRDL) are enriched in basic and acidic residues. Position 702 is a phosphoserine (S702).

The protein belongs to the CEP135/TSGA10 family. In terms of assembly, interacts with HIF1A. Post-translationally, processed into N-terminal 27-kDa and C-terminal 55-kDa fragments. As to expression, expressed in testis, predominantly in elongated spermatids (at protein level). Detected in spermatocytes only at the mRNA, but not at the protein level.

It is found in the cytoplasm. It localises to the cytoskeleton. Its subcellular location is the microtubule organizing center. The protein localises to the centrosome. The protein resides in the centriole. Functionally, plays a role in spermatogenesis. When overexpressed, prevents nuclear localization of HIF1A. In Rattus norvegicus (Rat), this protein is Testis-specific gene 10 protein (Tsga10).